An 86-amino-acid polypeptide reads, in one-letter code: Beta-toxin Tz1 (86 aa).

Positions 1–20 (MTRFVLFICCFFLIGMVVEC) are cleaved as a signal peptide. Positions 21–83 (KDGYLVGNDG…TWDRATNRCG (63 aa)) constitute an LCN-type CS-alpha/beta domain. 4 cysteine pairs are disulfide-bonded: Cys31–Cys82, Cys35–Cys57, Cys43–Cys63, and Cys47–Cys65. Position 84 is an arginine amide (Arg84).

Belongs to the long (4 C-C) scorpion toxin superfamily. Sodium channel inhibitor family. Beta subfamily. Expressed by the venom gland.

The protein localises to the secreted. Beta toxins bind voltage-independently at site-4 of sodium channels (Nav) and shift the voltage of activation toward more negative potentials thereby affecting sodium channel activation and promoting spontaneous and repetitive firing. Strongly affects skeletal muscle channels Nav1.4/SCN4A, poorly affects the neuronal channels Nav1.6/SCN8A and Nav1.2/SCN2A. Induces spastic paralysis of rear limbs, increased salivation, apnea, tachycardia and increased perspiration. The chain is Beta-toxin Tz1 from Tityus zulianus (Venezuelan scorpion).